We begin with the raw amino-acid sequence, 305 residues long: Large ribosomal subunit protein uL3c (305 aa).

Residues 1–84 constitute a chloroplast transit peptide; that stretch reads MAAILPTFSI…AVGGLEIKMM (84 aa). Residues 228–256 are disordered; it reads SHRALGSIGAGTTPGHVYKGKKMPGRMGG.

In terms of assembly, component of the chloroplast large ribosomal subunit (LSU). Mature 70S chloroplast ribosomes of higher plants consist of a small (30S) and a large (50S) subunit. The 30S small subunit contains 1 molecule of ribosomal RNA (16S rRNA) and 24 different proteins. The 50S large subunit contains 3 rRNA molecules (23S, 5S and 4.5S rRNA) and 33 different proteins.

The protein resides in the plastid. It is found in the chloroplast. Functionally, component of the chloroplast ribosome (chloro-ribosome), a dedicated translation machinery responsible for the synthesis of chloroplast genome-encoded proteins, including proteins of the transcription and translation machinery and components of the photosynthetic apparatus. The chain is Large ribosomal subunit protein uL3c (RPL3) from Spinacia oleracea (Spinach).